Reading from the N-terminus, the 234-residue chain is Purine nucleoside phosphorylase DeoD-type (234 aa).

Residue H5 participates in a purine D-ribonucleoside binding. Phosphate-binding positions include G21, R25, R44, and 88-91 (RVGT). A purine D-ribonucleoside is bound by residues 178 to 180 (EME) and 202 to 203 (SD). D203 acts as the Proton donor in catalysis.

Belongs to the PNP/UDP phosphorylase family. In terms of assembly, homohexamer; trimer of homodimers.

The catalysed reaction is a purine D-ribonucleoside + phosphate = a purine nucleobase + alpha-D-ribose 1-phosphate. It catalyses the reaction a purine 2'-deoxy-D-ribonucleoside + phosphate = a purine nucleobase + 2-deoxy-alpha-D-ribose 1-phosphate. In terms of biological role, catalyzes the reversible phosphorolytic breakdown of the N-glycosidic bond in the beta-(deoxy)ribonucleoside molecules, with the formation of the corresponding free purine bases and pentose-1-phosphate. The polypeptide is Purine nucleoside phosphorylase DeoD-type (Lactococcus lactis subsp. lactis (strain IL1403) (Streptococcus lactis)).